A 737-amino-acid polypeptide reads, in one-letter code: ATP-dependent RNA helicase DDX50 (737 aa).

The segment at 1-131 (MPGKLLWGDI…SDNKLEETLT (131 aa)) is disordered. Residues 11-20 (MELEAPLEES) show a composition bias toward acidic residues. Composition is skewed to basic and acidic residues over residues 38-51 (HYDSDEKSETRENG), 67-87 (KEKLNGDTEEGFNRLSDEFSK), and 117-131 (STHKSSDNKLEETLT). Ser41, Ser82, Ser86, Ser121, and Ser122 each carry phosphoserine. Lys125 participates in a covalent cross-link: Glycyl lysine isopeptide (Lys-Gly) (interchain with G-Cter in SUMO2). The Q motif signature appears at 137–165 (GAFSNFPISEETIKLLKGRGVTYLFPIQV). Positions 168–347 (FGPVYEGKDL…KKYMKSRYEQ (180 aa)) constitute a Helicase ATP-binding domain. 181–188 (ARTGTGKT) is an ATP binding site. Phosphothreonine is present on Thr247. The DEVD box motif lies at 290-293 (DEVD). One can recognise a Helicase C-terminal domain in the interval 380-524 (DVLQVYSGSE…GVPSTMDLVK (145 aa)). Ser518 carries the post-translational modification Phosphoserine. Residues 668 to 737 (YDGNTSSNSR…RSGGHKRSFD (70 aa)) form a disordered region. The span at 673–687 (SSNSRQRSGWSSGRS) shows a compositional bias: low complexity. A compositionally biased stretch (gly residues) spans 691–701 (GRSGGRSGGRS). Positions 702-712 (GRQSRQGSRSG) are enriched in low complexity. Residues 720–737 (RSGNRNRSRSGGHKRSFD) show a composition bias toward basic residues.

This sequence belongs to the DEAD box helicase family. DDX21/DDX50 subfamily. Interacts with C1QBP. Interacts with the ubiquitin ligase CTLH complex through GID4. Interacts with TICAM1. In terms of tissue distribution, highest expression in skeletal muscle, liver, heart, placenta, and kidney.

It is found in the nucleus. The protein resides in the nucleolus. The protein localises to the cytoplasm. The catalysed reaction is ATP + H2O = ADP + phosphate + H(+). ATP-dependent RNA helicase that may play a role in various aspects of RNA metabolism including pre-mRNA splicing or ribosomal RNA production. Also acts as a viral restriction factor and promotes the activation of the NF-kappa-B and IRF3 signaling pathways following its stimulation with viral RNA or infection with RNA and DNA viruses. For instance, decreases vaccinia virus, herpes simplex virus, Zika virus or dengue virus replication during the early stage of infection. Mechanistically, acts via the adapter TICAM1 and independently of the DDX1-DDX21-DHX36 helicase complex to induce the production of interferon-beta. The polypeptide is ATP-dependent RNA helicase DDX50 (DDX50) (Homo sapiens (Human)).